We begin with the raw amino-acid sequence, 302 residues long: Stanniocalcin-2 (302 aa).

The first 24 residues, 1 to 24 (MCAERLGHFMTLALVLATIDPARG), serve as a signal peptide directing secretion. The tract at residues 23–44 (RGTDATNPPEGPQDRSSQQKGR) is disordered. Residue Asn-73 is glycosylated (N-linked (GlcNAc...) asparagine). The disordered stretch occupies residues 218 to 302 (PPTAPPERQP…EQSEYSDIRR (85 aa)). Over residues 227-264 (PQVDRAKLSRAHHGEAGHHLPEPSSRETGRGAKGERGS) the composition is skewed to basic and acidic residues. Phosphoserine is present on residues Ser-250 and Ser-251. At Thr-254 the chain carries Phosphothreonine.

Belongs to the stanniocalcin family. In terms of assembly, homodimer; disulfide-linked.

The protein resides in the secreted. Its function is as follows. Has an anti-hypocalcemic action on calcium and phosphate homeostasis. The chain is Stanniocalcin-2 (STC2) from Macaca nemestrina (Pig-tailed macaque).